A 163-amino-acid polypeptide reads, in one-letter code: MDALEEESFALSFSSASDAEFDAVVGYLEDIIMDDEFQLLQRNFMDKYYQEFEDTEENKLTYTPIFNEYISLVEKYIEEQLLERIPGFNMAAFTTTLQHHKDEVAGDIFDMLLTFTDFLAFKEMFLDYRAEKEGRGLDLSSGLVVTSLCKSSSVPASQNNLRP.

The protein belongs to the ARL2BP family. Interacts with GTP bound ARL2 and ARL3; the complex ARL2-ARL2BP as well as ARL2BP alone, binds to SLC25A4/ANT1. Interaction with ARL2 may be required for targeting to cilia basal body. Interacts with STAT3; interaction is enhanced with ARL2. Found in a complex with ARL2, ARL2BP and SLC25A4. Interacts with STAT2, STAT3 and STAT4. Found in a complex with ARL2BP, ARL2 and SLC25A6. As to expression, expressed in brain.

The protein resides in the cytoplasm. Its subcellular location is the mitochondrion intermembrane space. It localises to the cytoskeleton. The protein localises to the microtubule organizing center. It is found in the centrosome. The protein resides in the nucleus. Its subcellular location is the spindle. It localises to the cilium basal body. Together with ARL2, plays a role in the nuclear translocation, retention and transcriptional activity of STAT3. May play a role as an effector of ARL2. This Bos taurus (Bovine) protein is ADP-ribosylation factor-like protein 2-binding protein (ARL2BP).